The primary structure comprises 132 residues: Small ribosomal subunit protein uS12 (132 aa).

Residue D89 is modified to 3-methylthioaspartic acid.

This sequence belongs to the universal ribosomal protein uS12 family. In terms of assembly, part of the 30S ribosomal subunit. Contacts proteins S8 and S17. May interact with IF1 in the 30S initiation complex.

Functionally, with S4 and S5 plays an important role in translational accuracy. Interacts with and stabilizes bases of the 16S rRNA that are involved in tRNA selection in the A site and with the mRNA backbone. Located at the interface of the 30S and 50S subunits, it traverses the body of the 30S subunit contacting proteins on the other side and probably holding the rRNA structure together. The combined cluster of proteins S8, S12 and S17 appears to hold together the shoulder and platform of the 30S subunit. This Campylobacter curvus (strain 525.92) protein is Small ribosomal subunit protein uS12.